Reading from the N-terminus, the 342-residue chain is Methylthioribose-1-phosphate isomerase (342 aa).

Substrate is bound by residues 44 to 46 (RGA), arginine 87, and glutamine 194. Aspartate 235 serves as the catalytic Proton donor. 245 to 246 (NK) is a binding site for substrate.

The protein belongs to the eIF-2B alpha/beta/delta subunits family. MtnA subfamily.

It carries out the reaction 5-(methylsulfanyl)-alpha-D-ribose 1-phosphate = 5-(methylsulfanyl)-D-ribulose 1-phosphate. It functions in the pathway amino-acid biosynthesis; L-methionine biosynthesis via salvage pathway; L-methionine from S-methyl-5-thio-alpha-D-ribose 1-phosphate: step 1/6. Functionally, catalyzes the interconversion of methylthioribose-1-phosphate (MTR-1-P) into methylthioribulose-1-phosphate (MTRu-1-P). This chain is Methylthioribose-1-phosphate isomerase, found in Acetivibrio thermocellus (strain ATCC 27405 / DSM 1237 / JCM 9322 / NBRC 103400 / NCIMB 10682 / NRRL B-4536 / VPI 7372) (Clostridium thermocellum).